A 105-amino-acid chain; its full sequence is Flagellar transcriptional regulator FlhD (105 aa).

Belongs to the FlhD family. As to quaternary structure, homodimer; disulfide-linked. Forms a heterohexamer composed of two FlhC and four FlhD subunits. Each FlhC binds a FlhD dimer, forming a heterotrimer, and a hexamer assembles by dimerization of two heterotrimers.

It localises to the cytoplasm. Functionally, functions in complex with FlhC as a master transcriptional regulator that regulates transcription of several flagellar and non-flagellar operons by binding to their promoter region. Activates expression of class 2 flagellar genes, including fliA, which is a flagellum-specific sigma factor that turns on the class 3 genes. Also regulates genes whose products function in a variety of physiological pathways. In Cupriavidus necator (strain ATCC 17699 / DSM 428 / KCTC 22496 / NCIMB 10442 / H16 / Stanier 337) (Ralstonia eutropha), this protein is Flagellar transcriptional regulator FlhD.